Reading from the N-terminus, the 272-residue chain is 2-dehydro-3-deoxyphosphooctonate aldolase (272 aa).

It belongs to the KdsA family.

It localises to the cytoplasm. It carries out the reaction D-arabinose 5-phosphate + phosphoenolpyruvate + H2O = 3-deoxy-alpha-D-manno-2-octulosonate-8-phosphate + phosphate. Its pathway is carbohydrate biosynthesis; 3-deoxy-D-manno-octulosonate biosynthesis; 3-deoxy-D-manno-octulosonate from D-ribulose 5-phosphate: step 2/3. It participates in bacterial outer membrane biogenesis; lipopolysaccharide biosynthesis. In Pelobacter propionicus (strain DSM 2379 / NBRC 103807 / OttBd1), this protein is 2-dehydro-3-deoxyphosphooctonate aldolase.